Consider the following 101-residue polypeptide: NAD(P)H-quinone oxidoreductase subunit 4L, chloroplastic (101 aa).

3 helical membrane passes run 2–22 (ILEH…YGLI), 32–52 (MCLE…SDFF), and 61–81 (IFCI…LAIV).

It belongs to the complex I subunit 4L family. NDH is composed of at least 16 different subunits, 5 of which are encoded in the nucleus.

It is found in the plastid. Its subcellular location is the chloroplast thylakoid membrane. The catalysed reaction is a plastoquinone + NADH + (n+1) H(+)(in) = a plastoquinol + NAD(+) + n H(+)(out). It catalyses the reaction a plastoquinone + NADPH + (n+1) H(+)(in) = a plastoquinol + NADP(+) + n H(+)(out). In terms of biological role, NDH shuttles electrons from NAD(P)H:plastoquinone, via FMN and iron-sulfur (Fe-S) centers, to quinones in the photosynthetic chain and possibly in a chloroplast respiratory chain. The immediate electron acceptor for the enzyme in this species is believed to be plastoquinone. Couples the redox reaction to proton translocation, and thus conserves the redox energy in a proton gradient. This chain is NAD(P)H-quinone oxidoreductase subunit 4L, chloroplastic, found in Olimarabidopsis pumila (Dwarf rocket).